A 384-amino-acid polypeptide reads, in one-letter code: Urea transporter 1 (384 aa).

Glu-39 bears the Phosphoserine mark. 5 helical membrane passes run 61-81 (ISQV…VGLL), 85-105 (PWWA…ALLL), 111-131 (AIAA…MAVF), 138-158 (FWWL…FSSA), and 168-188 (LPVF…ATGH). Residue Asn-206 is glycosylated (N-linked (GlcNAc...) asparagine). The next 4 membrane-spanning stretches (helical) occupy residues 250-270 (LMCL…LSLA), 276-296 (IYFG…GGMF), 305-325 (LLAL…AHLM), and 327-347 (VVHL…FLLL).

The protein belongs to the urea transporter family. In terms of assembly, homotrimer; each subunit contains a pore through which urea permeates. Identified in a complex with STOM. In terms of processing, N-glycosylated in red blood cells, as well as in most non-erythroid tissues, except in the gastrocnemius muscle and in the gastrointestinal tract, including liver, colon and stomach. Expressed in brain, kidney, heart, liver, lung, skeletal muscle, spleen, testis, ureter and urinary bladder (at protein level). Along the gastrointestinal tract, detected in colon, jejunum and stomach (at protein level). In the kidney, expressed in some microvessels of the inner and outer medulla, but not all (at protein level). Not detected in the cortex (at protein level). Detected in the urothelium all along the urinary tract, including the papilla surface, the ureter, the bladder and the urethra (at protein level). In the brain, expressed at the border of the corpus callosum and striatum in astrocytic cellular processes surrounding blood microvessels (at protein level). Detected in erythrocytes (at protein level).

Its subcellular location is the cell membrane. It is found in the basolateral cell membrane. The catalysed reaction is urea(in) = urea(out). In terms of biological role, mediates the transport of urea driven by a concentration gradient across the cell membranes of erythrocytes and the renal inner medullary collecting duct which is critical to the urinary concentrating mechanism. Facilitates water transport in erythrocytes. The sequence is that of Urea transporter 1 (Slc14a1) from Mus musculus (Mouse).